A 29-amino-acid polypeptide reads, in one-letter code: Cyclotide mela-2 (29 aa).

The cyclopeptide (Gly-Asp) cross-link spans 1–29 (GKPTCGETCFKGKCYTPGCTCSYPLCKKD). 3 disulfides stabilise this stretch: Cys5–Cys19, Cys9–Cys21, and Cys14–Cys26.

This is a cyclic peptide. Post-translationally, contains 3 disulfide bonds.

In terms of biological role, probably participates in a plant defense mechanism (Potential). Binds to and induces leakage in phospholipd membranes, particularly ones containing 1-palmitoyl-2-oleophosphatidylethanolamine (POPE). In vitro, displays cytotoxicity against cultured cells but no hemolytic activity towards fresh erythrocytes. Not active against Gram-negative bacterium E.coli ATCC 25922 or Gram-positive bacterium S.aureus ATCC 25923 up to a concentration of 64 uM. The polypeptide is Cyclotide mela-2 (Melicytus latifolius (Norfolk Island mahoe)).